A 64-amino-acid chain; its full sequence is Alpha-mammal toxin Lqh2 (64 aa).

The LCN-type CS-alpha/beta domain occupies 2 to 64 (KDGYIVDDVN…VRTKGPGRCR (63 aa)). Disulfide bonds link cysteine 12–cysteine 63, cysteine 16–cysteine 36, cysteine 22–cysteine 46, and cysteine 26–cysteine 48. Arginine 64 carries the arginine amide modification.

The protein belongs to the long (4 C-C) scorpion toxin superfamily. Sodium channel inhibitor family. Alpha subfamily. As to expression, expressed by the venom gland.

It localises to the secreted. Its function is as follows. Alpha toxins bind voltage-independently at site-3 of sodium channels (Nav) and inhibit the inactivation of the activated channels, thereby blocking neuronal transmission. The dissociation is voltage-dependent. Is active on mammals and competes for alpha-toxins binding on both mammalian and cockroach sodium channels. The sequence is that of Alpha-mammal toxin Lqh2 from Leiurus hebraeus (Hebrew deathstalker scorpion).